The following is a 270-amino-acid chain: tRNA (guanine-N(1)-)-methyltransferase (270 aa).

S-adenosyl-L-methionine is bound by residues Gly117 and 137–142 (IGDYVL).

It belongs to the RNA methyltransferase TrmD family. Homodimer.

The protein resides in the cytoplasm. It carries out the reaction guanosine(37) in tRNA + S-adenosyl-L-methionine = N(1)-methylguanosine(37) in tRNA + S-adenosyl-L-homocysteine + H(+). Its function is as follows. Specifically methylates guanosine-37 in various tRNAs. This is tRNA (guanine-N(1)-)-methyltransferase from Heliobacterium modesticaldum (strain ATCC 51547 / Ice1).